Reading from the N-terminus, the 500-residue chain is Hexokinase-3 (500 aa).

The chain crosses the membrane as a helical span at residues 4-24 (VGLGVAVGCAAVTCAIAAALV). The 453-residue stretch at 35–487 (RRAVALLREF…SGVGAALLAA (453 aa)) folds into the Hexokinase domain. A hexokinase small subdomain region spans residues 90–222 (SGSEEGVYYS…GLNVRVTALV (133 aa)). G104, T105, and N106 together coordinate ADP. D-glucose-binding residues include T188, K189, N223, and D224. Positions 223–476 (NDTVGTLALG…RNVTLRVTED (254 aa)) are hexokinase large subdomain. S247 contributes to the ADP binding site. 3 residues coordinate D-glucose: N250, E278, and E309. An ADP-binding site is contributed by G441.

It belongs to the hexokinase family. As to expression, expressed in roots, leaves, flowers, immature seeds and seed coat. Expressed in young shoots, tiller buds, endosperm seven days after fertilization, and interconnecting tissues such as pulvini and nodes.

It localises to the mitochondrion outer membrane. It carries out the reaction a D-hexose + ATP = a D-hexose 6-phosphate + ADP + H(+). It catalyses the reaction D-fructose + ATP = D-fructose 6-phosphate + ADP + H(+). The catalysed reaction is D-glucose + ATP = D-glucose 6-phosphate + ADP + H(+). It functions in the pathway carbohydrate metabolism; hexose metabolism. Its pathway is carbohydrate degradation; glycolysis; D-glyceraldehyde 3-phosphate and glycerone phosphate from D-glucose: step 1/4. Fructose and glucose phosphorylating enzyme. Involved in the regulation of cell expansion in spikelet hulls, grain size, and gibberellin biosynthesis and homeostasis. This Oryza sativa subsp. japonica (Rice) protein is Hexokinase-3.